A 267-amino-acid polypeptide reads, in one-letter code: Methylglyoxal reductase DkgB (267 aa).

Residue Y39 is the Proton donor of the active site. H97 is a binding site for substrate. 179-231 (MTLAYGKALKDEVIARIAAKHNATPAQVILAWAMGEGYSVIPSSTKRENLESN) contributes to the NADP(+) binding site.

This sequence belongs to the aldo/keto reductase family. As to quaternary structure, monomer.

The protein localises to the cytoplasm. The enzyme catalyses hydroxyacetone + NADP(+) = methylglyoxal + NADPH + H(+). In terms of biological role, aldo-keto reductase that significantly contributes to cellular methylglyoxal detoxification by catalyzing the NADPH-dependent conversion of methylglyoxal to acetol. The chain is Methylglyoxal reductase DkgB from Escherichia coli O157:H7.